The sequence spans 362 residues: Heat-inducible transcription repressor HrcA (362 aa).

Belongs to the HrcA family.

Negative regulator of class I heat shock genes (grpE-dnaK-dnaJ and groELS operons). Prevents heat-shock induction of these operons. This is Heat-inducible transcription repressor HrcA from Rhizobium rhizogenes (strain K84 / ATCC BAA-868) (Agrobacterium radiobacter).